A 258-amino-acid polypeptide reads, in one-letter code: Phosphoribosylaminoimidazole-succinocarboxamide synthase (258 aa).

This sequence belongs to the SAICAR synthetase family.

It catalyses the reaction 5-amino-1-(5-phospho-D-ribosyl)imidazole-4-carboxylate + L-aspartate + ATP = (2S)-2-[5-amino-1-(5-phospho-beta-D-ribosyl)imidazole-4-carboxamido]succinate + ADP + phosphate + 2 H(+). Its pathway is purine metabolism; IMP biosynthesis via de novo pathway; 5-amino-1-(5-phospho-D-ribosyl)imidazole-4-carboxamide from 5-amino-1-(5-phospho-D-ribosyl)imidazole-4-carboxylate: step 1/2. In Rhizorhabdus wittichii (strain DSM 6014 / CCUG 31198 / JCM 15750 / NBRC 105917 / EY 4224 / RW1) (Sphingomonas wittichii), this protein is Phosphoribosylaminoimidazole-succinocarboxamide synthase.